Reading from the N-terminus, the 294-residue chain is Glycine--tRNA ligase alpha subunit (294 aa).

The protein belongs to the class-II aminoacyl-tRNA synthetase family. In terms of assembly, tetramer of two alpha and two beta subunits.

Its subcellular location is the cytoplasm. It catalyses the reaction tRNA(Gly) + glycine + ATP = glycyl-tRNA(Gly) + AMP + diphosphate. The chain is Glycine--tRNA ligase alpha subunit from Trichormus variabilis (strain ATCC 29413 / PCC 7937) (Anabaena variabilis).